The chain runs to 617 residues: Melatonin-related receptor (617 aa).

At 1–30 (MGPTLAVPTPYGCIGCKLPQPEYPPALIIF) the chain is on the extracellular side. A helical membrane pass occupies residues 31–51 (MFCAMVITIVVDLIGNSMVIL). At 52–64 (AVTKNKKLRNSGN) the chain is on the cytoplasmic side. Residues 65–85 (IFVVSLSVADMLVAIYPYPLM) form a helical membrane-spanning segment. At 86-103 (LHAMSIGGWDLSQLQCQM) the chain is on the extracellular side. Cys-101 and Cys-178 are disulfide-bonded. Residues 104–124 (VGFITGLSVVGSIFNIVAIAI) form a helical membrane-spanning segment. Residues 125–143 (NRYCYICHSLQYERIFSVR) lie on the Cytoplasmic side of the membrane. A helical membrane pass occupies residues 144–164 (NTCIYLVITWIMTVLAVLPNM). Topologically, residues 165-188 (YIGTIEYDPRTYTCIFNYLNNPVF) are extracellular. The chain crosses the membrane as a helical span at residues 189-209 (TVTIVCIHFVLPLLIVGFCYV). The Cytoplasmic segment spans residues 210–239 (RIWTKVLAARDPAGQNPDNQLAEVRNFLTM). Residues 240 to 260 (FVIFLLFAVCWCPINVLTVLV) form a helical membrane-spanning segment. The Extracellular portion of the chain corresponds to 261–273 (AVSPKEMAGKIPN). A helical transmembrane segment spans residues 274–294 (WLYLAAYFIAYFNSCLNAVIY). The Cytoplasmic segment spans residues 295–617 (GLLNENFRRE…VEDDPDEMAV (323 aa)). Disordered stretches follow at residues 340-438 (AHAR…ATVY) and 464-596 (SVHF…VTTS). The segment covering 341–353 (HARDQAREQDRAH) has biased composition (basic and acidic residues). A compositionally biased stretch (polar residues) spans 485 to 500 (GSHSKSAFSAATSHPK).

It belongs to the G-protein coupled receptor 1 family. As to quaternary structure, homodimer, and heterodimer with MTNR1A and MTNR1B. Interacts with KAT5. Interacts with RTN4 isoform A/NOGO-A. Interacts with TGFBR1. Interacts with GTF2I. Post-translationally, cleaved by CAPN1 in a calcium-dependent manner. In terms of tissue distribution, hypothalamus and pituitary.

It localises to the cell membrane. Its subcellular location is the postsynaptic density. The protein resides in the nucleus. In terms of biological role, g protein-coupled receptor that plays a role in numerous physiological processes including regulation of energy metabolism, neurite outgrowth or cell migration. Promotes self-renewal and neuronal differentiation of neural progenitor cells through activation of the NOTCH and WNT/beta-catenin signaling pathways. Modulates the KAT5-dependent glucocorticoid receptor signaling by modulating KAT5 subcellular compartmentalisation. Also plays a role in the activation TGFBR1 in the absence of TGFBR2 by interfering with FKBP1A binding to TGFBR1, leading to induction of both canonical and non-canonical SMAD signaling pathways resulting in inhibition of proliferation or promotion of migration. Its function is as follows. Upon cleavage by CAPN1, functions as a scaffold in the nucleus for interacting partners such as GTF2I to promote FOS promoter activation. The polypeptide is Melatonin-related receptor (GPR50) (Homo sapiens (Human)).